Here is a 494-residue protein sequence, read N- to C-terminus: Transcription factor SOX-9 (494 aa).

2 disordered regions span residues 1-66 and 159-275; these read MNLL…ESDE and ERLR…FRDV. Low complexity predominate over residues 27–42; it reads SDDSAGSPCPSGSGSD. 2 stretches are compositionally biased toward basic and acidic residues: residues 56-66 and 159-174; these read GDPDLKKESDE and ERLR…DYKY. The interval 63–103 is dimerization (DIM); that stretch reads ESDEDKFPVCIREAVSQVLKGYDWTLVPMPVRVNGSSKNKP. The interval 63-103 is PQA; that stretch reads ESDEDKFPVCIREAVSQVLKGYDWTLVPMPVRVNGSSKNKP. Residue serine 64 is modified to Phosphoserine. A DNA-binding region (HMG box) is located at residues 105–173; the sequence is VKRPMNAFMV…QHKKDHPDYK (69 aa). Serine 181 carries the post-translational modification Phosphoserine. Residues 211-222 are compositionally biased toward low complexity; it reads SPQSSSSISEVH. The interval 224-309 is transactivation domain (TAM); that stretch reads PGEHSGQSQG…LPPNGHPGVP (86 aa). 2 short sequence motifs (9aaTAD) span residues 277 to 286 and 292 to 300; these read IGELSSDVIS and DVNEFDQYL. Residues 326-337 are compositionally biased toward low complexity; that stretch reads SSASSPAGAGHA. The disordered stretch occupies residues 326 to 402; the sequence is SSASSPAGAG…PQQQQQQQQQ (77 aa). Residues 344-353 show a composition bias toward pro residues; the sequence is PQPPQPPAQP. The tract at residues 372-494 is transactivation domain (TAC); it reads RPHIKTEQLS…QPVYTQLTRP (123 aa). A Glycyl lysine isopeptide (Lys-Gly) (interchain with G-Cter in SUMO) cross-link involves residue lysine 376. Residues 378–387 show a composition bias toward polar residues; that stretch reads EQLSPSHYSE. The span at 388-402 shows a compositional bias: low complexity; the sequence is QQQHSPQQQQQQQQQ. Positions 445–453 match the 9aaTAD 3 motif; sequence GGLYSTFTY. The tract at residues 462 to 494 is disordered; the sequence is YTPIADTSGVPSIPQTHSPQHWEQPVYTQLTRP. Positions 470–494 are enriched in polar residues; sequence GVPSIPQTHSPQHWEQPVYTQLTRP.

As to quaternary structure, interacts with SNAI2; triggers neural crest delamination in a phosphorylation dependent manner. Interacts with UBE2I. Phosphorylated at Ser-181 in the developing neural tube. Phosphorylation at either Ser-64 or Ser-181 is required for sumoylation, but phosphorylation is not dependent on sumoylation. Sumoylation is enhanced by PKA. Phosphorylation is required for interaction with SNAI2 to trigger neural crest delamination and for an efficient trunk neural crest delamination, whereas sumoylation plays a less significant role. Phosphorylation and sumoylation are induced by BMP signaling pathway. In terms of processing, sumoylated at Lys-376; phosphorylation at either Ser-64 or Ser-181 is required for sumoylation. Sumoylation is induced by BMP signaling pathway.

Its subcellular location is the nucleus. Its function is as follows. Transcription factor that plays a key role in chondrocytes differentiation and skeletal development. Specifically binds the 5'-ACAAAG-3' DNA motif present in enhancers and super-enhancers and promotes expression of genes important for chondrogenesis, including COL2A1. Plays a central role in successive steps of chondrocyte differentiation. Absolutely required for precartilaginous condensation, the first step in chondrogenesis during which skeletal progenitors differentiate into prechondrocytes. Together with SOX5 and SOX6, required for overt chondrogenesis when condensed prechondrocytes differentiate into early stage chondrocytes, the second step in chondrogenesis. Later, required to direct hypertrophic maturation and block osteoblast differentiation of growth plate chondrocytes: maintains chondrocyte columnar proliferation, delays prehypertrophy and then prevents osteoblastic differentiation of chondrocytes. Also required for chondrocyte hypertrophy, both indirectly, by keeping the lineage fate of chondrocytes, and directly, by remaining present in upper hypertrophic cells. Low lipid levels are the main nutritional determinant for chondrogenic commitment of skeletal progenitor cells: when lipids levels are low, FOXO transcription factors promote expression of SOX9, which induces chondrogenic commitment and suppresses fatty acid oxidation. In addition to cartilage development, also acts as a regulator of proliferation and differentiation in epithelial stem/progenitor cells. In response to bone morphogenetic protein stimulus, phosphorylation is induced and then sumoylation, allowing cooperation with SNAI2 to trigger neural crest delamination. This chain is Transcription factor SOX-9, found in Gallus gallus (Chicken).